We begin with the raw amino-acid sequence, 273 residues long: HMP-PP phosphatase (273 aa).

Asp-8 functions as the Nucleophile in the catalytic mechanism. Mg(2+)-binding residues include Asp-8, Asp-10, and Asp-212.

The protein belongs to the HAD-like hydrolase superfamily. Cof family. Requires Mg(2+) as cofactor.

The catalysed reaction is 4-amino-2-methyl-5-(diphosphooxymethyl)pyrimidine + H2O = 4-amino-2-methyl-5-(phosphooxymethyl)pyrimidine + phosphate + H(+). Functionally, catalyzes the hydrolysis of 4-amino-2-methyl-5-hydroxymethylpyrimidine pyrophosphate (HMP-PP) to 4-amino-2-methyl-5-hydroxymethylpyrimidine phosphate (HMP-P). The sequence is that of HMP-PP phosphatase from Yersinia enterocolitica serotype O:8 / biotype 1B (strain NCTC 13174 / 8081).